A 402-amino-acid chain; its full sequence is Tyrosine--tRNA ligase (402 aa).

A 'HIGH' region motif is present at residues 47–56; it reads PTAPDLHLGH. Positions 232-236 match the 'KMSKS' region motif; that stretch reads KMSKS. Lys-235 is a binding site for ATP. An S4 RNA-binding domain is found at 341–401; sequence VGILDVLKQI…GKKRFMKLNI (61 aa).

The protein belongs to the class-I aminoacyl-tRNA synthetase family. TyrS type 2 subfamily. In terms of assembly, homodimer.

Its subcellular location is the cytoplasm. It carries out the reaction tRNA(Tyr) + L-tyrosine + ATP = L-tyrosyl-tRNA(Tyr) + AMP + diphosphate + H(+). Catalyzes the attachment of tyrosine to tRNA(Tyr) in a two-step reaction: tyrosine is first activated by ATP to form Tyr-AMP and then transferred to the acceptor end of tRNA(Tyr). The chain is Tyrosine--tRNA ligase from Helicobacter pylori (strain ATCC 700392 / 26695) (Campylobacter pylori).